Consider the following 246-residue polypeptide: tRNA pseudouridine synthase A (246 aa).

Aspartate 52 (nucleophile) is an active-site residue. Tyrosine 111 is a binding site for substrate.

This sequence belongs to the tRNA pseudouridine synthase TruA family. As to quaternary structure, homodimer.

The catalysed reaction is uridine(38/39/40) in tRNA = pseudouridine(38/39/40) in tRNA. In terms of biological role, formation of pseudouridine at positions 38, 39 and 40 in the anticodon stem and loop of transfer RNAs. The sequence is that of tRNA pseudouridine synthase A from Fervidobacterium nodosum (strain ATCC 35602 / DSM 5306 / Rt17-B1).